Here is a 93-residue protein sequence, read N- to C-terminus: Large ribosomal subunit protein uL23 (93 aa).

The protein belongs to the universal ribosomal protein uL23 family. In terms of assembly, part of the 50S ribosomal subunit. Contacts protein L29, and trigger factor when it is bound to the ribosome.

One of the early assembly proteins it binds 23S rRNA. One of the proteins that surrounds the polypeptide exit tunnel on the outside of the ribosome. Forms the main docking site for trigger factor binding to the ribosome. The polypeptide is Large ribosomal subunit protein uL23 (Opitutus terrae (strain DSM 11246 / JCM 15787 / PB90-1)).